We begin with the raw amino-acid sequence, 206 residues long: Protein GrpE (206 aa).

Residues 1–18 (MNNEDKKLQDEQLQKETV) are compositionally biased toward basic and acidic residues. Positions 1-21 (MNNEDKKLQDEQLQKETVEAA) are disordered.

It belongs to the GrpE family. In terms of assembly, homodimer.

The protein localises to the cytoplasm. In terms of biological role, participates actively in the response to hyperosmotic and heat shock by preventing the aggregation of stress-denatured proteins, in association with DnaK and GrpE. It is the nucleotide exchange factor for DnaK and may function as a thermosensor. Unfolded proteins bind initially to DnaJ; upon interaction with the DnaJ-bound protein, DnaK hydrolyzes its bound ATP, resulting in the formation of a stable complex. GrpE releases ADP from DnaK; ATP binding to DnaK triggers the release of the substrate protein, thus completing the reaction cycle. Several rounds of ATP-dependent interactions between DnaJ, DnaK and GrpE are required for fully efficient folding. This is Protein GrpE from Photobacterium profundum (strain SS9).